The chain runs to 343 residues: Mediator of RNA polymerase II transcription subunit 2 (343 aa).

Disordered stretches follow at residues 105-141 (KQQQ…AQQL) and 252-277 (STNE…ISSN). Positions 107–132 (QQEEEQRRKHQAELEKNKRQQEHDAA) are enriched in basic and acidic residues. Positions 252–264 (STNEASTNNRNND) are enriched in polar residues.

The protein belongs to the Mediator complex subunit 2 family. In terms of assembly, component of the Mediator complex.

The protein resides in the nucleus. Component of the Mediator complex, a coactivator involved in the regulated transcription of nearly all RNA polymerase II-dependent genes. Mediator functions as a bridge to convey information from gene-specific regulatory proteins to the basal RNA polymerase II transcription machinery. Mediator is recruited to promoters by direct interactions with regulatory proteins and serves as a scaffold for the assembly of a functional preinitiation complex with RNA polymerase II and the general transcription factors. The protein is Mediator of RNA polymerase II transcription subunit 2 (MED2) of Eremothecium gossypii (strain ATCC 10895 / CBS 109.51 / FGSC 9923 / NRRL Y-1056) (Yeast).